The primary structure comprises 242 residues: GLIPR1-like protein 1 (242 aa).

A signal peptide spans 1 to 22 (MALKNKFSCLWILGLCLVATTS). Residues 39 to 171 (EAHNEWRGKV…ASTAIFVCNY (133 aa)) enclose the SCP domain. N-linked (GlcNAc...) asparagine glycosylation is present at N119. Residue G221 is the site of GPI-anchor amidated glycine attachment. Positions 222–242 (RAPQQTAFNPFSLGFLLLRIF) are cleaved as a propeptide — removed in mature form.

Belongs to the CRISP family. In terms of assembly, part of a oolemmal binding multimeric complex (IZUMO1 complex) composed at least of IZUMO1 and GLIPR1L1; the complex assemblage is influenced by the maturation status of the male germ cell. Interacts with IZUMO1. N-glycosylated. N-glycosylation decreases during the transit in the caput. In terms of tissue distribution, highly expressed in testis.

It localises to the cytoplasmic vesicle. Its subcellular location is the secretory vesicle. The protein localises to the acrosome. The protein resides in the cell membrane. It is found in the membrane raft. It localises to the secreted. In terms of biological role, required for optimal fertilization at the stage of sperm-oocyte fusion, plays a role in optimizing acrosome function, the translocation of IZUMO1 during the acrosome reaction and the fertilization process. Component of epididymosomes, one type of membranous microvesicules which mediate the transfer of lipids and proteins to spermatozoa plasma membrane during epididymal maturation. Also component of the CD9-positive microvesicules found in the cauda region. The protein is GLIPR1-like protein 1 (GLIPR1L1) of Homo sapiens (Human).